Here is a 681-residue protein sequence, read N- to C-terminus: Methionine--tRNA ligase (681 aa).

The short motif at proline 12 to histidine 22 is the 'HIGH' region element. Residues cysteine 143, cysteine 146, cysteine 156, and cysteine 159 each contribute to the Zn(2+) site. A 'KMSKS' region motif is present at residues lysine 327–serine 331. Lysine 330 serves as a coordination point for ATP. Residues phenylalanine 545–proline 557 are compositionally biased toward basic and acidic residues. A disordered region spans residues phenylalanine 545 to lysine 566. The tRNA-binding domain occupies glutamate 580–lysine 681.

It belongs to the class-I aminoacyl-tRNA synthetase family. MetG type 1 subfamily. In terms of assembly, homodimer. Requires Zn(2+) as cofactor.

It is found in the cytoplasm. The catalysed reaction is tRNA(Met) + L-methionine + ATP = L-methionyl-tRNA(Met) + AMP + diphosphate. Is required not only for elongation of protein synthesis but also for the initiation of all mRNA translation through initiator tRNA(fMet) aminoacylation. The chain is Methionine--tRNA ligase from Leptospira biflexa serovar Patoc (strain Patoc 1 / ATCC 23582 / Paris).